A 180-amino-acid polypeptide reads, in one-letter code: Endothelin-2 (180 aa).

The first 26 residues, 1–26, serve as a signal peptide directing secretion; the sequence is MVALPTAWCSVALALLVALHEGKSQS. The propeptide occupies 27-47; that stretch reads AATSEEPPAPSARARGSHLRL. Cystine bridges form between Cys-50–Cys-64 and Cys-52–Cys-60. Positions 71–180 are excised as a propeptide; the sequence is VNTPGQTAPY…ESSHSRWRKR (110 aa). Positions 97-112 are endothelin-like; sequence CECYSTRDSACVTFCH. The tract at residues 157 to 180 is disordered; it reads NFTRHQQQKATREPESSHSRWRKR.

This sequence belongs to the endothelin/sarafotoxin family.

The protein localises to the secreted. Endothelins are endothelium-derived vasoconstrictor peptides. This Atelerix albiventris (Middle-African hedgehog) protein is Endothelin-2 (EDN2).